A 266-amino-acid polypeptide reads, in one-letter code: UPF0354 protein lwe1624 (266 aa).

This sequence belongs to the UPF0354 family.

The sequence is that of UPF0354 protein lwe1624 from Listeria welshimeri serovar 6b (strain ATCC 35897 / DSM 20650 / CCUG 15529 / CIP 8149 / NCTC 11857 / SLCC 5334 / V8).